Reading from the N-terminus, the 680-residue chain is DNA-directed RNA polymerase subunit beta' (680 aa).

Residues cysteine 69, cysteine 71, cysteine 87, and cysteine 90 each contribute to the Zn(2+) site. Mg(2+)-binding residues include aspartate 489, aspartate 491, and aspartate 493.

Belongs to the RNA polymerase beta' chain family. RpoC1 subfamily. In plastids the minimal PEP RNA polymerase catalytic core is composed of four subunits: alpha, beta, beta', and beta''. When a (nuclear-encoded) sigma factor is associated with the core the holoenzyme is formed, which can initiate transcription. Mg(2+) serves as cofactor. Zn(2+) is required as a cofactor.

The protein localises to the plastid. Its subcellular location is the chloroplast. It carries out the reaction RNA(n) + a ribonucleoside 5'-triphosphate = RNA(n+1) + diphosphate. DNA-dependent RNA polymerase catalyzes the transcription of DNA into RNA using the four ribonucleoside triphosphates as substrates. The chain is DNA-directed RNA polymerase subunit beta' from Manihot esculenta (Cassava).